A 116-amino-acid chain; its full sequence is SPbeta prophage-derived uncharacterized protein YomQ (116 aa).

This Bacillus subtilis (strain 168) protein is SPbeta prophage-derived uncharacterized protein YomQ (yomQ).